The following is a 96-amino-acid chain: MHQEYWILEVKVTPKSKQNTIVGFEGEVLKIRVTEVPEKGKANEAVIALLAKALSLPKRDITLIPGDTSRKKRILLPKSTESIVSHWREKGFYAGL.

Belongs to the UPF0235 family.

This chain is UPF0235 protein CAB243, found in Chlamydia abortus (strain DSM 27085 / S26/3) (Chlamydophila abortus).